The chain runs to 102 residues: Aspartyl/glutamyl-tRNA(Asn/Gln) amidotransferase subunit C (102 aa).

It belongs to the GatC family. As to quaternary structure, heterotrimer of A, B and C subunits.

It catalyses the reaction L-glutamyl-tRNA(Gln) + L-glutamine + ATP + H2O = L-glutaminyl-tRNA(Gln) + L-glutamate + ADP + phosphate + H(+). It carries out the reaction L-aspartyl-tRNA(Asn) + L-glutamine + ATP + H2O = L-asparaginyl-tRNA(Asn) + L-glutamate + ADP + phosphate + 2 H(+). In terms of biological role, allows the formation of correctly charged Asn-tRNA(Asn) or Gln-tRNA(Gln) through the transamidation of misacylated Asp-tRNA(Asn) or Glu-tRNA(Gln) in organisms which lack either or both of asparaginyl-tRNA or glutaminyl-tRNA synthetases. The reaction takes place in the presence of glutamine and ATP through an activated phospho-Asp-tRNA(Asn) or phospho-Glu-tRNA(Gln). The protein is Aspartyl/glutamyl-tRNA(Asn/Gln) amidotransferase subunit C of Lactobacillus acidophilus (strain ATCC 700396 / NCK56 / N2 / NCFM).